The following is a 159-amino-acid chain: uncharacterized protein (159 aa).

2 consecutive transmembrane segments (helical) span residues 17 to 37 and 40 to 60; these read ALFISAVLGLFCGLSFFTILV and LLQFVFFFVIGLLIEYIFKKY.

It localises to the cell membrane. This is an uncharacterized protein from Borreliella burgdorferi (strain ATCC 35210 / DSM 4680 / CIP 102532 / B31) (Borrelia burgdorferi).